Consider the following 430-residue polypeptide: C-terminal-binding protein 1 (430 aa).

Residues 1–59 (MSGVRPPIMNGPMHPRPLVALLDGRDCTVEMPILKDVATVAFCDAQSTQEIHEKVLNEA) form an interaction with GLIS2 1 region. Residues S89, 169–174 (IGLGRV), D193, 226–232 (CGLNEHN), 253–255 (TAR), and D279 each bind NAD(+). The active site involves R255. The interaction with GLIS2 2 stretch occupies residues 277–349 (ALDVHESEPF…VNKDHLTAAT (73 aa)). Residue E284 is part of the active site. S289 bears the Phosphoserine mark. The active-site Proton donor is H304. Residues 398-430 (SHGLPPVAHPPHAPSPGQTVKPEADRDHTTDQL) form a disordered region. A Phosphoserine modification is found at S412. K418 is covalently cross-linked (Glycyl lysine isopeptide (Lys-Gly) (interchain with G-Cter in SUMO)). Basic and acidic residues predominate over residues 419–430 (PEADRDHTTDQL).

This sequence belongs to the D-isomer specific 2-hydroxyacid dehydrogenase family. Homo- or heterodimer. Heterodimer with CTBP2. Interacts with ELK3 (via its PXDLS motif). Interacts with RBBP8 (via its PXDLS motif); the interaction is disrupted by binding to adenovirus E1A. Interacts with PNN, MECOM and ZFHX1B. Interacts with ZNF366 (via PXDLS motif). Interaction with SATB1 (non-acetylated form); the interaction stabilizes its attachment to DNA and promotes transcription repression. Interacts with PRDM16; the interaction represses white adipose tissue (WAT)-specific genes expression. Interacts with GLIS2, HIPK2, FOXP1, FOXP2, HDAC4, HDAC5, HDAC9, NRIP1 and WIZ. Interacts with ZNF217. Interacts with BCL6; the interaction is required for BCL6 transcriptional autoinhibition and inhibition of some BCL6 target genes. Interacts with IKZF4. Interacts with MCRIP1 (unphosphorylated form, via the PXDLS motif); competitively inhibiting CTBP-ZEB1 interaction. Interacts with Bassoon/BSN; this interaction targets and anchors CTBP1 to presynapses. Interacts with SIMC1. It depends on NAD(+) as a cofactor. Post-translationally, the level of phosphorylation appears to be regulated during the cell cycle. Phosphorylation by HIPK2 on Ser-412 induces proteasomal degradation. ADP-ribosylated; when cells are exposed to brefeldin A. In terms of processing, sumoylation on Lys-418 is promoted by the E3 SUMO-protein ligase CBX4.

It is found in the cytoplasm. The protein localises to the nucleus. It localises to the synapse. The protein resides in the synaptosome. Corepressor targeting diverse transcription regulators such as GLIS2 or BCL6. Has dehydrogenase activity. Involved in controlling the equilibrium between tubular and stacked structures in the Golgi complex. Functions in brown adipose tissue (BAT) differentiation. The polypeptide is C-terminal-binding protein 1 (Ctbp1) (Rattus norvegicus (Rat)).